A 207-amino-acid chain; its full sequence is Large ribosomal subunit protein uL4 (207 aa).

Residues 49–78 (HAVKNRSAVSGGGRKPWRQKGTGRARQGSI) form a disordered region.

It belongs to the universal ribosomal protein uL4 family. Part of the 50S ribosomal subunit.

Its function is as follows. One of the primary rRNA binding proteins, this protein initially binds near the 5'-end of the 23S rRNA. It is important during the early stages of 50S assembly. It makes multiple contacts with different domains of the 23S rRNA in the assembled 50S subunit and ribosome. Functionally, forms part of the polypeptide exit tunnel. The polypeptide is Large ribosomal subunit protein uL4 (Streptococcus pneumoniae serotype 2 (strain D39 / NCTC 7466)).